A 407-amino-acid chain; its full sequence is E3 ubiquitin-protein ligase TRIM13 (407 aa).

The RING-type zinc finger occupies 10–58; sequence CPICCSLFDDPRVLPCSHNFCKKCLEGLLEGNVRNSLWRPSPFKCPTCR. Residues 89 to 131 form a B box-type zinc finger; that stretch reads PKMPVCKGHLGQPLNIFCVTDMQLICGICATRGEHTKHVFSSI. Cys94, His97, Cys117, and His123 together coordinate Zn(2+). The stretch at 172 to 200 forms a coiled coil; sequence LQLLTKDSDKVKEFFEKLQHTLDQKKNEI. A helical membrane pass occupies residues 316-336; the sequence is LLLMMVVLLGLLIFFGPTVFL.

Belongs to the TRIM/RBCC family. Interacts (via C-terminal domain) with VCP. Interacts with AKT1; the interaction ubiquitinates AKT1 and leads to its proteasomal degradation. Interacts with MDM2; the interaction ubiquitinates AKT1 and leads to its proteasomal degradation. Interacts with p62/SQSTM1. Interacts with TRAF6. Interacts with IKBKG/NEMO. Post-translationally, auto-ubiquitinated; requires the RING-type zinc finger. Auto-polyubiquitination leads to proteasomal degradation.

It is found in the endoplasmic reticulum membrane. It carries out the reaction S-ubiquitinyl-[E2 ubiquitin-conjugating enzyme]-L-cysteine + [acceptor protein]-L-lysine = [E2 ubiquitin-conjugating enzyme]-L-cysteine + N(6)-ubiquitinyl-[acceptor protein]-L-lysine.. The protein operates within protein modification; protein ubiquitination. Endoplasmic reticulum (ER) membrane anchored E3 ligase involved in the retrotranslocation and turnover of membrane and secretory proteins from the ER through a set of processes named ER-associated degradation (ERAD). This process acts on misfolded proteins as well as in the regulated degradation of correctly folded proteins. Enhances ionizing radiation-induced p53/TP53 stability and apoptosis via ubiquitinating MDM2 and AKT1 and decreasing AKT1 kinase activity through MDM2 and AKT1 proteasomal degradation. Regulates ER stress-induced autophagy, and may act as a tumor suppressor. Also plays a role in innate immune response by stimulating NF-kappa-B activity in the TLR2 signaling pathway. Ubiquitinates TRAF6 via the 'Lys-29'-linked polyubiquitination chain resulting in NF-kappa-B activation. Participates as well in T-cell receptor-mediated NF-kappa-B activation. In the presence of TNF, modulates the IKK complex by regulating IKBKG/NEMO ubiquitination leading to the repression of NF-kappa-B. This is E3 ubiquitin-protein ligase TRIM13 (Trim13) from Mus musculus (Mouse).